The chain runs to 778 residues: Phosphoribosylformylglycinamidine synthase subunit PurL (778 aa).

His-44 is a catalytic residue. Residues Tyr-47 and Lys-86 each coordinate ATP. Glu-88 lines the Mg(2+) pocket. Residues 89-92 (SHNH) and Arg-111 each bind substrate. The active-site Proton acceptor is His-90. 2 residues coordinate Mg(2+): Asp-112 and Asp-265. A substrate-binding site is contributed by 309–311 (ESQ). Residues 455–474 (TRQPPGEGLPGRSGQAGPPK) are disordered. ATP-binding residues include Asn-518 and Gly-555. Asn-556 lines the Mg(2+) pocket. Position 558 (Ser-558) interacts with substrate.

It belongs to the FGAMS family. Monomer. Part of the FGAM synthase complex composed of 1 PurL, 1 PurQ and 2 PurS subunits.

It localises to the cytoplasm. The enzyme catalyses N(2)-formyl-N(1)-(5-phospho-beta-D-ribosyl)glycinamide + L-glutamine + ATP + H2O = 2-formamido-N(1)-(5-O-phospho-beta-D-ribosyl)acetamidine + L-glutamate + ADP + phosphate + H(+). The protein operates within purine metabolism; IMP biosynthesis via de novo pathway; 5-amino-1-(5-phospho-D-ribosyl)imidazole from N(2)-formyl-N(1)-(5-phospho-D-ribosyl)glycinamide: step 1/2. Part of the phosphoribosylformylglycinamidine synthase complex involved in the purines biosynthetic pathway. Catalyzes the ATP-dependent conversion of formylglycinamide ribonucleotide (FGAR) and glutamine to yield formylglycinamidine ribonucleotide (FGAM) and glutamate. The FGAM synthase complex is composed of three subunits. PurQ produces an ammonia molecule by converting glutamine to glutamate. PurL transfers the ammonia molecule to FGAR to form FGAM in an ATP-dependent manner. PurS interacts with PurQ and PurL and is thought to assist in the transfer of the ammonia molecule from PurQ to PurL. The protein is Phosphoribosylformylglycinamidine synthase subunit PurL of Symbiobacterium thermophilum (strain DSM 24528 / JCM 14929 / IAM 14863 / T).